An 801-amino-acid chain; its full sequence is Ferredoxin:CoB-CoM heterodisulfide reductase subunit A (801 aa).

Residue 149-172 (GGGIAGITAALNLADNGVSTVLVE) participates in FAD binding. 2 4Fe-4S ferredoxin-type domains span residues 239-269 (KKPR…FNCG) and 285-320 (PKIY…FSQK). C248, C251, C254, C258, C295, C303, C306, and C310 together coordinate [4Fe-4S] cluster. The interval 382 to 409 (FSKASSDPTPATCDSRCEDSSDESQGTD) is disordered. 4Fe-4S ferredoxin-type domains are found at residues 606 to 634 (EIAT…VNES) and 635 to 664 (GRVV…IAGF). Residues C615, C618, C621, C624, C644, C647, C650, and C654 each coordinate [4Fe-4S] cluster.

This sequence belongs to the HdrA family. In terms of assembly, the ferredoxin:CoB-CoM heterodisulfide reductase is composed of three subunits; HdrA1, HdrB1 and HdrC1. Requires [4Fe-4S] cluster as cofactor. FAD is required as a cofactor.

It localises to the cytoplasm. The enzyme catalyses coenzyme B + coenzyme M + 2 oxidized [2Fe-2S]-[ferredoxin] = coenzyme M-coenzyme B heterodisulfide + 2 reduced [2Fe-2S]-[ferredoxin] + 2 H(+). It functions in the pathway cofactor metabolism; coenzyme M-coenzyme B heterodisulfide reduction; coenzyme B and coenzyme M from coenzyme M-coenzyme B heterodisulfide: step 1/1. In terms of biological role, part of a complex that catalyzes the reversible reduction of CoM-S-S-CoB to the thiol-coenzymes H-S-CoM (coenzyme M) and H-S-CoB (coenzyme B). Probably involved in methylotrophic methanogenesis but not in aceticlastic methanogenesis. The polypeptide is Ferredoxin:CoB-CoM heterodisulfide reductase subunit A (Methanosarcina acetivorans (strain ATCC 35395 / DSM 2834 / JCM 12185 / C2A)).